The chain runs to 852 residues: Leucine--tRNA ligase (852 aa).

Residues 42 to 52 (PYPSGKLHMGH) carry the 'HIGH' region motif. The segment at 586-606 (NKYVPADQVDPNDPKDPETGE) is disordered. The 'KMSKS' region motif lies at 614 to 618 (KMSKS). Lysine 617 lines the ATP pocket.

The protein belongs to the class-I aminoacyl-tRNA synthetase family.

The protein resides in the cytoplasm. The catalysed reaction is tRNA(Leu) + L-leucine + ATP = L-leucyl-tRNA(Leu) + AMP + diphosphate. This chain is Leucine--tRNA ligase, found in Picosynechococcus sp. (strain ATCC 27264 / PCC 7002 / PR-6) (Agmenellum quadruplicatum).